A 217-amino-acid polypeptide reads, in one-letter code: Adenylate kinase (217 aa).

10–15 (GAGKGT) lines the ATP pocket. The segment at 30–59 (STGDMLRAQVKAGTALGLEAKKHMDAGGLV) is NMP. AMP-binding positions include Thr-31, Arg-36, 57-59 (GLV), 85-88 (GFPR), and Gln-92. Positions 122 to 159 (GRRAHLASGRTYHVKFNPPKVEGIDDVTGEPLVQRDDD) are LID. ATP contacts are provided by residues Arg-123 and 132-133 (TY). AMP-binding residues include Arg-156 and Arg-167. Gly-203 provides a ligand contact to ATP.

This sequence belongs to the adenylate kinase family. As to quaternary structure, monomer.

It localises to the cytoplasm. It carries out the reaction AMP + ATP = 2 ADP. Its pathway is purine metabolism; AMP biosynthesis via salvage pathway; AMP from ADP: step 1/1. Functionally, catalyzes the reversible transfer of the terminal phosphate group between ATP and AMP. Plays an important role in cellular energy homeostasis and in adenine nucleotide metabolism. The chain is Adenylate kinase from Dechloromonas aromatica (strain RCB).